A 596-amino-acid polypeptide reads, in one-letter code: Uptake hydrogenase large subunit (596 aa).

The Ni(2+) site is built by Cys-75, Cys-78, Cys-575, and Cys-578.

It belongs to the [NiFe]/[NiFeSe] hydrogenase large subunit family. Heterodimer of a large and a small subunit. It depends on Ni(2+) as a cofactor.

The protein localises to the cell membrane. The catalysed reaction is H2 + A = AH2. Its function is as follows. This enzyme recycles the H(2) produced by nitrogenase to increase the production of ATP and to protect nitrogenase against inhibition or damage by O(2) under carbon- or phosphate-limited conditions. In Rhizobium leguminosarum bv. viciae, this protein is Uptake hydrogenase large subunit (hupB).